The primary structure comprises 275 residues: NifU-like protein 5, mitochondrial (275 aa).

The N-terminal 61 residues, 1–61 (MKGLTRLLNS…TNASRNCSRS (61 aa)), are a transit peptide targeting the mitochondrion.

The protein belongs to the NifU family.

The protein resides in the mitochondrion. Molecular scaffold for [Fe-S] cluster assembly of mitochondrial iron-sulfur proteins. The chain is NifU-like protein 5, mitochondrial (NIFU5) from Arabidopsis thaliana (Mouse-ear cress).